Consider the following 479-residue polypeptide: Serine palmitoyltransferase 1 (479 aa).

At 1 to 16 the chain is on the lumenal side; the sequence is MFLFDIYNNILYYTKE. The helical transmembrane segment at 17 to 37 threads the bilayer; that stretch reads FIVTSTSPNLFIHGLMAVFII. Over 38-479 the chain is Cytoplasmic; the sequence is YLLTKRPFKP…KCTSFVLESN (442 aa).

The protein belongs to the class-II pyridoxal-phosphate-dependent aminotransferase family. In terms of assembly, forms a heterodimer with sptB. Pyridoxal 5'-phosphate is required as a cofactor.

It is found in the endoplasmic reticulum membrane. The catalysed reaction is L-serine + hexadecanoyl-CoA + H(+) = 3-oxosphinganine + CO2 + CoA. The protein operates within lipid metabolism; sphingolipid metabolism. Functionally, component of serine palmitoyltransferase (SPT), which catalyzes the committed step in the synthesis of sphingolipids, the condensation of serine with palmitoyl CoA to form the long chain base 3-ketosphinganine. This Dictyostelium discoideum (Social amoeba) protein is Serine palmitoyltransferase 1 (sptA).